A 459-amino-acid chain; its full sequence is Protein YTP1 (459 aa).

Residues 1 to 6 (MTAANK) are Extracellular-facing. A helical membrane pass occupies residues 7–27 (NIVFGFSRSISAILLICFFFE). Over 28-59 (KVCGDMEHDMGMDDTSGYTRPEIVQAGSKSFH) the chain is Cytoplasmic. Residues 60-80 (WLCTLGFLLLLPSVVTCLSFA) traverse the membrane as a helical segment. At 81–82 (GR) the chain is on the extracellular side. The helical transmembrane segment at 83–103 (IYSATLLQCTCAVYAFLEAAV) threads the bilayer. Topologically, residues 104–122 (LRFQDNDGVENRTSRGTAW) are cytoplasmic. The helical transmembrane segment at 123-143 (FLVGLTWITLFFGGLAGGTGF) threads the bilayer. Over 144–170 (LVKSKRLQTFISNAGEKRLSYIHRGLS) the chain is Extracellular. Residues 171-191 (FLTVLTGWVKVCLAPVALFGF) traverse the membrane as a helical segment. The Cytoplasmic portion of the chain corresponds to 192 to 205 (CREAHTGQCIAHGI). Residues 206 to 226 (MGSAFVLYGFIYVLVLVIPWI) traverse the membrane as a helical segment. Over 227–266 (RSAQTSYSQDYVDSWVMCIWGVVNTFTEHRWGREGWSVHD) the chain is Extracellular. The helical transmembrane segment at 267–287 (YQHTFMGIIWWTGGILGIFLS) threads the bilayer. The Cytoplasmic segment spans residues 288–295 (RNGRRTFV). A helical transmembrane segment spans residues 296 to 316 (PSLIIIFTGWAMSEHAQHLII). At 317–322 (STKVHN) the chain is on the extracellular side. A helical membrane pass occupies residues 323–343 (MFGLVLMCGGALRIIEISFLL). At 344 to 351 (RDKRTLDK) the chain is on the cytoplasmic side. A helical membrane pass occupies residues 352 to 372 (IHSFQYLAPFCLVCSGLLFMG). Topologically, residues 373–389 (ANEEQLILVLRLGGDHS) are extracellular. The chain crosses the membrane as a helical span at residues 390-410 (AYVLIIVSGAFLVYFWMIACL). Residues 411 to 459 (EFYLYLLEKGKQGFLPKSYELEEENNNVSFELDNISNEDVDEDTTPFNV) are Cytoplasmic-facing.

It localises to the membrane. This chain is Protein YTP1 (YTP1), found in Saccharomyces cerevisiae (strain ATCC 204508 / S288c) (Baker's yeast).